A 155-amino-acid chain; its full sequence is 2-C-methyl-D-erythritol 2,4-cyclodiphosphate synthase (155 aa).

A divalent metal cation is bound by residues aspartate 8 and histidine 10. Residues 8–10 and 34–35 each bind 4-CDP-2-C-methyl-D-erythritol 2-phosphate; these read DVH and HS. Histidine 42 lines the a divalent metal cation pocket. 4-CDP-2-C-methyl-D-erythritol 2-phosphate-binding positions include 56–58, 61–65, 132–135, and arginine 142; these read DIG, FPDKD, and TTTE.

This sequence belongs to the IspF family. As to quaternary structure, homotrimer. It depends on a divalent metal cation as a cofactor.

It carries out the reaction 4-CDP-2-C-methyl-D-erythritol 2-phosphate = 2-C-methyl-D-erythritol 2,4-cyclic diphosphate + CMP. Its pathway is isoprenoid biosynthesis; isopentenyl diphosphate biosynthesis via DXP pathway; isopentenyl diphosphate from 1-deoxy-D-xylulose 5-phosphate: step 4/6. In terms of biological role, involved in the biosynthesis of isopentenyl diphosphate (IPP) and dimethylallyl diphosphate (DMAPP), two major building blocks of isoprenoid compounds. Catalyzes the conversion of 4-diphosphocytidyl-2-C-methyl-D-erythritol 2-phosphate (CDP-ME2P) to 2-C-methyl-D-erythritol 2,4-cyclodiphosphate (ME-CPP) with a corresponding release of cytidine 5-monophosphate (CMP). The chain is 2-C-methyl-D-erythritol 2,4-cyclodiphosphate synthase from Desulfatibacillum aliphaticivorans.